The sequence spans 108 residues: UPF0235 protein Rpal_0418 (108 aa).

This sequence belongs to the UPF0235 family.

This is UPF0235 protein Rpal_0418 from Rhodopseudomonas palustris (strain TIE-1).